The following is a 192-amino-acid chain: Chromophore lyase CpcS/CpeS 2 (192 aa).

The protein belongs to the CpcS/CpeS biliprotein lyase family.

Covalently attaches a chromophore to Cys residue(s) of phycobiliproteins. This Synechocystis sp. (strain ATCC 27184 / PCC 6803 / Kazusa) protein is Chromophore lyase CpcS/CpeS 2.